We begin with the raw amino-acid sequence, 447 residues long: Oxysterols receptor LXR-alpha (447 aa).

2 disordered regions span residues 1-37 (MSLWLGAPVPDIPPDSAVELWKPGAQDASSQAQGGSS) and 65-88 (ALLTRAEPPSEPTEIRPQKRKKGP). A transactivation AF-1; required for ligand-independent transactivation function region spans residues 1-96 (MSLWLGAPVP…GPAPKMLGNE (96 aa)). Positions 24 to 37 (GAQDASSQAQGGSS) are enriched in low complexity. The nuclear receptor DNA-binding region spans 95–170 (NELCSVCGDK…AGMREECVLS (76 aa)). 2 NR C4-type zinc fingers span residues 98-118 (CSVCGDKASGFHYNVLSCEGC) and 134-158 (CHSGGHCPMDTYMRRKCQECRLRKC). Residues 180 to 202 (KRQEEEQAHATSLPPRASSPPQI) are disordered. Positions 205–447 (QLSPEQLGMI…LLSEIWDVHE (243 aa)) are transactivation AF-2; required for ligand-dependent transactivation function; mediates interaction with CCAR2. An NR LBD domain is found at 209 to 447 (EQLGMIEKLV…LLSEIWDVHE (239 aa)).

It belongs to the nuclear hormone receptor family. NR1 subfamily. In terms of assembly, heterodimer of NR1H3 and RXR (retinoic acid receptor). Interacts with CCAR2 (via N-terminus) in a ligand-independent manner. Interacts with SIRT1 and this interaction is inhibited by CCAR2. Interacts with GPS2. In terms of processing, ubiquitinated by UBR5, leading to its degradation: UBR5 specifically recognizes and binds ligand-bound NR1H3 when it is not associated with coactivators (NCOAs). In presence of NCOAs, the UBR5-degron is not accessible, preventing its ubiquitination and degradation. In terms of tissue distribution, visceral organs specific expression. Strong expression was found in liver, kidney and intestine followed by spleen and to a lesser extent the adrenals.

Its subcellular location is the nucleus. It localises to the cytoplasm. Its function is as follows. Nuclear receptor that exhibits a ligand-dependent transcriptional activation activity. Interaction with retinoic acid receptor (RXR) shifts RXR from its role as a silent DNA-binding partner to an active ligand-binding subunit in mediating retinoid responses through target genes defined by LXRES. LXRES are DR4-type response elements characterized by direct repeats of two similar hexanuclotide half-sites spaced by four nucleotides. Plays an important role in the regulation of cholesterol homeostasis, regulating cholesterol uptake through MYLIP-dependent ubiquitination of LDLR, VLDLR and LRP8. Interplays functionally with RORA for the regulation of genes involved in liver metabolism. Induces LPCAT3-dependent phospholipid remodeling in endoplasmic reticulum (ER) membranes of hepatocytes, driving SREBF1 processing and lipogenesis. Via LPCAT3, triggers the incorporation of arachidonate into phosphatidylcholines of ER membranes, increasing membrane dynamics and enabling triacylglycerols transfer to nascent very low-density lipoprotein (VLDL) particles. Via LPCAT3 also counteracts lipid-induced ER stress response and inflammation, likely by modulating SRC kinase membrane compartmentalization and limiting the synthesis of lipid inflammatory mediators. In Homo sapiens (Human), this protein is Oxysterols receptor LXR-alpha (NR1H3).